Consider the following 154-residue polypeptide: uncharacterized protein (154 aa).

The 137-residue stretch at 7–143 (RSELEKTAVQ…IFSFVGKAAD (137 aa)) folds into the HTH marR-type domain. A DNA-binding region (H-T-H motif) is located at residues 57-80 (AGELGKKTGLSTGSVTALVDRLEK).

This is an uncharacterized protein from Bacillus subtilis (strain 168).